A 1401-amino-acid polypeptide reads, in one-letter code: DNA-directed RNA polymerase subunit beta'' (1401 aa).

Zn(2+)-binding residues include Cys224, Cys295, Cys302, and Cys305.

It belongs to the RNA polymerase beta' chain family. RpoC2 subfamily. In terms of assembly, in plastids the minimal PEP RNA polymerase catalytic core is composed of four subunits: alpha, beta, beta', and beta''. When a (nuclear-encoded) sigma factor is associated with the core the holoenzyme is formed, which can initiate transcription. Zn(2+) serves as cofactor.

The protein localises to the plastid. It is found in the chloroplast. It carries out the reaction RNA(n) + a ribonucleoside 5'-triphosphate = RNA(n+1) + diphosphate. Functionally, DNA-dependent RNA polymerase catalyzes the transcription of DNA into RNA using the four ribonucleoside triphosphates as substrates. The sequence is that of DNA-directed RNA polymerase subunit beta'' from Ipomoea purpurea (Common morning glory).